A 223-amino-acid chain; its full sequence is 26S proteasome non-ATPase regulatory subunit 9 (223 aa).

Basic and acidic residues predominate over residues Arg103–Ser121. Residues Arg103 to Ser141 are disordered. The 88-residue stretch at Gln108–Arg195 folds into the PDZ domain. Ser129 is modified (phosphoserine).

This sequence belongs to the proteasome subunit p27 family. In terms of assembly, interacts with PSMC3. Part of a transient complex (modulator) containing PSMD9, PSMC6 and PSMC3 formed during the assembly of the 26S proteasome. Expressed in all tissues tested, highly expressed in liver and kidney.

Acts as a chaperone during the assembly of the 26S proteasome, specifically of the base subcomplex of the PA700/19S regulatory complex (RC). During the base subcomplex assembly is part of an intermediate PSMD9:PSMC6:PSMC3 module, also known as modulator trimer complex; PSMD9 is released during the further base assembly process. This Homo sapiens (Human) protein is 26S proteasome non-ATPase regulatory subunit 9 (PSMD9).